The sequence spans 336 residues: Ferredoxin--NADP reductase 1 (336 aa).

Positions 37, 45, 50, 90, 125, 287, and 328 each coordinate FAD.

Belongs to the ferredoxin--NADP reductase type 2 family. As to quaternary structure, homodimer. It depends on FAD as a cofactor.

It carries out the reaction 2 reduced [2Fe-2S]-[ferredoxin] + NADP(+) + H(+) = 2 oxidized [2Fe-2S]-[ferredoxin] + NADPH. This is Ferredoxin--NADP reductase 1 (ycgT) from Bacillus subtilis (strain 168).